A 295-amino-acid chain; its full sequence is Pyridoxal 5'-phosphate synthase subunit PdxS (295 aa).

Aspartate 25 provides a ligand contact to D-ribose 5-phosphate. The active-site Schiff-base intermediate with D-ribose 5-phosphate is the lysine 82. Residue glycine 154 participates in D-ribose 5-phosphate binding. Residue arginine 166 coordinates D-glyceraldehyde 3-phosphate. D-ribose 5-phosphate contacts are provided by residues glycine 215 and 236–237 (GS).

It belongs to the PdxS/SNZ family. In the presence of PdxT, forms a dodecamer of heterodimers.

The catalysed reaction is aldehydo-D-ribose 5-phosphate + D-glyceraldehyde 3-phosphate + L-glutamine = pyridoxal 5'-phosphate + L-glutamate + phosphate + 3 H2O + H(+). It functions in the pathway cofactor biosynthesis; pyridoxal 5'-phosphate biosynthesis. In terms of biological role, catalyzes the formation of pyridoxal 5'-phosphate from ribose 5-phosphate (RBP), glyceraldehyde 3-phosphate (G3P) and ammonia. The ammonia is provided by the PdxT subunit. Can also use ribulose 5-phosphate and dihydroxyacetone phosphate as substrates, resulting from enzyme-catalyzed isomerization of RBP and G3P, respectively. This chain is Pyridoxal 5'-phosphate synthase subunit PdxS, found in Actinobacillus pleuropneumoniae serotype 3 (strain JL03).